Consider the following 202-residue polypeptide: Inner membrane-spanning protein YciB (202 aa).

Transmembrane regions (helical) follow at residues 3–23 (FFLD…AGAA), 46–66 (ILIA…IVWL), 74–94 (MLWV…VFHN), 100–120 (WKPT…ALLF), 145–165 (LAWI…AYGY), and 173–193 (FKLF…GFYL).

It belongs to the YciB family.

The protein localises to the cell inner membrane. Functionally, plays a role in cell envelope biogenesis, maintenance of cell envelope integrity and membrane homeostasis. The chain is Inner membrane-spanning protein YciB from Azoarcus sp. (strain BH72).